A 217-amino-acid chain; its full sequence is Ribonuclease HII (217 aa).

In terms of domain architecture, RNase H type-2 spans 16–217 (YCIAGVDEVG…VARVLGTYHD (202 aa)). Asp-22, Glu-23, and Asp-114 together coordinate a divalent metal cation.

This sequence belongs to the RNase HII family. The cofactor is Mn(2+). It depends on Mg(2+) as a cofactor.

It localises to the cytoplasm. It carries out the reaction Endonucleolytic cleavage to 5'-phosphomonoester.. Its function is as follows. Endonuclease that specifically degrades the RNA of RNA-DNA hybrids. The polypeptide is Ribonuclease HII (Colwellia psychrerythraea (strain 34H / ATCC BAA-681) (Vibrio psychroerythus)).